Here is a 126-residue protein sequence, read N- to C-terminus: Penton protein P31 (126 aa).

It is found in the virion. In association with P2 and trimeric P5, forms the spike complexes located at the 5-fold vertices of the capsid. Essential for viral infectivity. The sequence is that of Penton protein P31 (XXXI) from Acinetobacter calcoaceticus (Arthrobacter siderocapsulatus).